The primary structure comprises 556 residues: Formate--tetrahydrofolate ligase (556 aa).

65 to 72 (TPAGEGKT) contacts ATP.

The protein belongs to the formate--tetrahydrofolate ligase family.

It catalyses the reaction (6S)-5,6,7,8-tetrahydrofolate + formate + ATP = (6R)-10-formyltetrahydrofolate + ADP + phosphate. Its pathway is one-carbon metabolism; tetrahydrofolate interconversion. This chain is Formate--tetrahydrofolate ligase, found in Alkaliphilus oremlandii (strain OhILAs) (Clostridium oremlandii (strain OhILAs)).